We begin with the raw amino-acid sequence, 218 residues long: Thiopurine S-methyltransferase (218 aa).

Residues Trp-10, Leu-45, Glu-66, and Arg-123 each coordinate S-adenosyl-L-methionine.

Belongs to the class I-like SAM-binding methyltransferase superfamily. TPMT family.

The protein localises to the cytoplasm. The enzyme catalyses S-adenosyl-L-methionine + a thiopurine = S-adenosyl-L-homocysteine + a thiopurine S-methylether.. The polypeptide is Thiopurine S-methyltransferase (Shewanella sp. (strain MR-7)).